The chain runs to 608 residues: Glutamine--fructose-6-phosphate aminotransferase [isomerizing] (608 aa).

The active-site Nucleophile; for GATase activity is the cysteine 2. In terms of domain architecture, Glutamine amidotransferase type-2 spans 2-217 (CGIVGIVGTQ…DGDCAIVTRD (216 aa)). 2 SIS domains span residues 281 to 422 (ADKA…ARGT) and 456 to 598 (LSRD…VDQP). The For Fru-6P isomerization activity role is filled by lysine 603.

As to quaternary structure, homodimer.

It localises to the cytoplasm. The enzyme catalyses D-fructose 6-phosphate + L-glutamine = D-glucosamine 6-phosphate + L-glutamate. Functionally, catalyzes the first step in hexosamine metabolism, converting fructose-6P into glucosamine-6P using glutamine as a nitrogen source. This Agrobacterium fabrum (strain C58 / ATCC 33970) (Agrobacterium tumefaciens (strain C58)) protein is Glutamine--fructose-6-phosphate aminotransferase [isomerizing].